Consider the following 144-residue polypeptide: Large ribosomal subunit protein uL15 (144 aa).

The segment at 1–48 (MRLNTLSPAAGSKSAAKRVGRGIGSGTGKTCGRGHKGQKSRSGGGVRI) is disordered. Positions 21-31 (RGIGSGTGKTC) are enriched in gly residues.

Belongs to the universal ribosomal protein uL15 family. As to quaternary structure, part of the 50S ribosomal subunit.

Binds to the 23S rRNA. The polypeptide is Large ribosomal subunit protein uL15 (Shewanella woodyi (strain ATCC 51908 / MS32)).